A 199-amino-acid chain; its full sequence is Protein ZNRD2 (199 aa).

Ala2 is modified (N-acetylalanine). Zn(2+)-binding residues include Cys53, Cys56, Cys70, and Cys73. Ser94 is subject to Phosphoserine. The tract at residues 100–125 is disordered; the sequence is QLASASELPLGSRPAPQPPVPRPEHC. The Nuclear export signal motif lies at 173 to 194; that stretch reads SLETSIQLCGLIRACAEALRSL.

As to quaternary structure, homodimer. Zn(2+) serves as cofactor.

It localises to the cytoplasm. In terms of biological role, might play a role in mitosis. Antigenic molecule. Could be a centromere-associated protein. May induce anti-centromere antibodies. The protein is Protein ZNRD2 of Homo sapiens (Human).